We begin with the raw amino-acid sequence, 227 residues long: Cytochrome c oxidase subunit 2 (227 aa).

Residues 1-14 (MANHSQLGFQDASS) are Mitochondrial intermembrane-facing. A helical transmembrane segment spans residues 15-45 (PIMEELVEFHDHALMVALAICSLVLYLLTLM). Over 46 to 58 (LTQKLSSNTVDAQ) the chain is Mitochondrial matrix. A helical transmembrane segment spans residues 59–86 (EVELIWTILPAIVLVLLALPSLQILYMM). At 87 to 227 (DEIEEPDLTL…FETWSSLLSS (141 aa)) the chain is on the mitochondrial intermembrane side. Cu cation-binding residues include H160, C195, E197, C199, H203, and M206. E197 contributes to the Mg(2+) binding site.

Belongs to the cytochrome c oxidase subunit 2 family. Component of the cytochrome c oxidase (complex IV, CIV), a multisubunit enzyme composed of 14 subunits. The complex is composed of a catalytic core of 3 subunits MT-CO1, MT-CO2 and MT-CO3, encoded in the mitochondrial DNA, and 11 supernumerary subunits COX4I, COX5A, COX5B, COX6A, COX6B, COX6C, COX7A, COX7B, COX7C, COX8 and NDUFA4, which are encoded in the nuclear genome. The complex exists as a monomer or a dimer and forms supercomplexes (SCs) in the inner mitochondrial membrane with NADH-ubiquinone oxidoreductase (complex I, CI) and ubiquinol-cytochrome c oxidoreductase (cytochrome b-c1 complex, complex III, CIII), resulting in different assemblies (supercomplex SCI(1)III(2)IV(1) and megacomplex MCI(2)III(2)IV(2)). Found in a complex with TMEM177, COA6, COX18, COX20, SCO1 and SCO2. Interacts with TMEM177 in a COX20-dependent manner. Interacts with COX20. Interacts with COX16. Cu cation is required as a cofactor.

It localises to the mitochondrion inner membrane. It carries out the reaction 4 Fe(II)-[cytochrome c] + O2 + 8 H(+)(in) = 4 Fe(III)-[cytochrome c] + 2 H2O + 4 H(+)(out). Its function is as follows. Component of the cytochrome c oxidase, the last enzyme in the mitochondrial electron transport chain which drives oxidative phosphorylation. The respiratory chain contains 3 multisubunit complexes succinate dehydrogenase (complex II, CII), ubiquinol-cytochrome c oxidoreductase (cytochrome b-c1 complex, complex III, CIII) and cytochrome c oxidase (complex IV, CIV), that cooperate to transfer electrons derived from NADH and succinate to molecular oxygen, creating an electrochemical gradient over the inner membrane that drives transmembrane transport and the ATP synthase. Cytochrome c oxidase is the component of the respiratory chain that catalyzes the reduction of oxygen to water. Electrons originating from reduced cytochrome c in the intermembrane space (IMS) are transferred via the dinuclear copper A center (CU(A)) of subunit 2 and heme A of subunit 1 to the active site in subunit 1, a binuclear center (BNC) formed by heme A3 and copper B (CU(B)). The BNC reduces molecular oxygen to 2 water molecules using 4 electrons from cytochrome c in the IMS and 4 protons from the mitochondrial matrix. In Coturnix japonica (Japanese quail), this protein is Cytochrome c oxidase subunit 2 (MT-CO2).